Reading from the N-terminus, the 325-residue chain is GMP reductase (325 aa).

Catalysis depends on Cys174, which acts as the Thioimidate intermediate. 203 to 226 (LIADGGIRTHGDIAKSIRFGASMV) is a binding site for NADP(+).

The protein belongs to the IMPDH/GMPR family. GuaC type 2 subfamily.

It carries out the reaction IMP + NH4(+) + NADP(+) = GMP + NADPH + 2 H(+). Its function is as follows. Catalyzes the irreversible NADPH-dependent deamination of GMP to IMP. It functions in the conversion of nucleobase, nucleoside and nucleotide derivatives of G to A nucleotides, and in maintaining the intracellular balance of A and G nucleotides. The polypeptide is GMP reductase (Staphylococcus aureus (strain JH9)).